A 371-amino-acid polypeptide reads, in one-letter code: Cytochrome b (371 aa).

Transmembrane regions (helical) follow at residues 25-45, 69-90, 105-125, and 170-190; these read FGSM…FLAV, WMMQ…YIHI, WMSG…GYVL, and FFAL…LHVI. 2 residues coordinate heme b: His75 and His89. Residues His174 and His188 each coordinate heme b. His193 contributes to the a ubiquinone binding site. 4 helical membrane-spanning segments follow: residues 218 to 238, 280 to 300, 312 to 332, and 339 to 358; these read YKDF…VSFF, LGGA…PFTH, LYQL…WAAT, and FITI…ISIP.

The protein belongs to the cytochrome b family. The cytochrome bc1 complex contains 3 respiratory subunits (MT-CYB, CYC1 and UQCRFS1), 2 core proteins (UQCRC1 and UQCRC2) and probably 6 low-molecular weight proteins. It depends on heme b as a cofactor.

It localises to the mitochondrion inner membrane. Its function is as follows. Component of the ubiquinol-cytochrome c reductase complex (complex III or cytochrome b-c1 complex) that is part of the mitochondrial respiratory chain. The b-c1 complex mediates electron transfer from ubiquinol to cytochrome c. Contributes to the generation of a proton gradient across the mitochondrial membrane that is then used for ATP synthesis. The sequence is that of Cytochrome b (MT-CYB) from Malayopython reticulatus (Reticulate python).